A 311-amino-acid chain; its full sequence is 1,4-dihydroxy-2-naphthoate octaprenyltransferase (311 aa).

Helical transmembrane passes span 31–51 (LTAS…YVKV), 53–73 (LLLF…TNLF), 104–126 (TILQ…ICAS), 131–153 (LALI…LPIA), 157–177 (FGEL…SFFI), 182–202 (INMQ…AINL), 220–240 (LAIL…FAVA), 242–262 (IWVV…VVFL), and 290–310 (TAQT…ISYF).

Belongs to the MenA family. Type 1 subfamily.

The protein localises to the cell membrane. It carries out the reaction an all-trans-polyprenyl diphosphate + 1,4-dihydroxy-2-naphthoate + H(+) = a 2-demethylmenaquinol + CO2 + diphosphate. Its pathway is quinol/quinone metabolism; menaquinone biosynthesis; menaquinol from 1,4-dihydroxy-2-naphthoate: step 1/2. Functionally, conversion of 1,4-dihydroxy-2-naphthoate (DHNA) to demethylmenaquinone (DMK). This is 1,4-dihydroxy-2-naphthoate octaprenyltransferase from Bacillus subtilis (strain 168).